Reading from the N-terminus, the 408-residue chain is Alpha-2Da adrenergic receptor (408 aa).

Residues 1–30 (MSVTPTANSTEEAANITASPRLWPYTEPAS) lie on the Extracellular side of the membrane. N8 and N15 each carry an N-linked (GlcNAc...) asparagine glycan. Residues 31–55 (AIIILVVSLIILLTIVGNVLVIVAV) form a helical membrane-spanning segment. Over 56 to 67 (LTSRALRAPQNL) the chain is Cytoplasmic. A helical transmembrane segment spans residues 68–93 (FLVSLACADILVATLVIPFSLANEIM). Residues 94-103 (GYWYFGSTWC) lie on the Extracellular side of the membrane. C103 and C176 are disulfide-bonded. A helical transmembrane segment spans residues 104–126 (AFYLALDVLFCTSSIVHLCAISL). The Cytoplasmic segment spans residues 127-147 (DRYWSVTKAVRYNLKRTPRRI). A helical membrane pass occupies residues 148–170 (KCMIAVVWLISAVISFPPLIMTK). The Extracellular segment spans residues 171 to 181 (HDEKECLINDE). The helical transmembrane segment at 182-205 (TWYILSSCAVSFFAPGLIMITVYC) threads the bilayer. The Cytoplasmic portion of the chain corresponds to 206–332 (KIYRVAKQRS…QMREKRFTFV (127 aa)). The interval 242-306 (FEKESPSSNS…SCRVSWAAHQ (65 aa)) is disordered. Positions 260 to 270 (ELDDIDLEESA) are enriched in acidic residues. Residues 277-286 (RGSRFSKRRR) are compositionally biased toward basic residues. A helical membrane pass occupies residues 333–356 (LAVVMGVFVLCWFPFFFTYSLQAV). Over 357–369 (CGERCGPPEALFK) the chain is Extracellular. The helical transmembrane segment at 370–390 (LFFWIGYCNSSVNPIIYTIFN) threads the bilayer. At 391–408 (RDFRKAFKKVVCWSAQRT) the chain is on the cytoplasmic side.

Belongs to the G-protein coupled receptor 1 family. Adrenergic receptor subfamily. ADRA2D sub-subfamily.

The protein resides in the cell membrane. Its function is as follows. Alpha-2 adrenergic receptors mediate the catecholamine-induced inhibition of adenylate cyclase through the action of G proteins. The order of potency for this receptor is dexmedetomidine &gt; norepinephrine &gt; epinephrine &gt; oxymetazoline. The chain is Alpha-2Da adrenergic receptor (adra2da) from Danio rerio (Zebrafish).